The sequence spans 237 residues: Ribosomal RNA small subunit methyltransferase G (237 aa).

Residues Gly-79, Cys-130–Glu-131, and Arg-147 each bind S-adenosyl-L-methionine.

The protein belongs to the methyltransferase superfamily. RNA methyltransferase RsmG family.

It localises to the cytoplasm. Specifically methylates the N7 position of a guanine in 16S rRNA. The protein is Ribosomal RNA small subunit methyltransferase G of Malacoplasma penetrans (strain HF-2) (Mycoplasma penetrans).